The chain runs to 189 residues: Large ribosomal subunit protein uL5c (189 aa).

This sequence belongs to the universal ribosomal protein uL5 family. As to quaternary structure, part of the 50S ribosomal subunit; contacts the 5S rRNA.

Its subcellular location is the plastid. It localises to the chloroplast. In terms of biological role, binds 5S rRNA, forms part of the central protuberance of the 50S subunit. This is Large ribosomal subunit protein uL5c (rpl5) from Chara vulgaris (Common stonewort).